The chain runs to 115 residues: NADH-ubiquinone oxidoreductase chain 3 (115 aa).

3 consecutive transmembrane segments (helical) span residues 4–24 (LMAL…AFWL), 55–75 (FFLV…LLPL), and 86–106 (TMML…AYEW).

It belongs to the complex I subunit 3 family. In terms of assembly, core subunit of respiratory chain NADH dehydrogenase (Complex I) which is composed of 45 different subunits. Interacts with TMEM186. Interacts with TMEM242.

The protein localises to the mitochondrion inner membrane. It carries out the reaction a ubiquinone + NADH + 5 H(+)(in) = a ubiquinol + NAD(+) + 4 H(+)(out). In terms of biological role, core subunit of the mitochondrial membrane respiratory chain NADH dehydrogenase (Complex I) which catalyzes electron transfer from NADH through the respiratory chain, using ubiquinone as an electron acceptor. Essential for the catalytic activity of complex I. The sequence is that of NADH-ubiquinone oxidoreductase chain 3 from Peromyscus gossypinus (Cotton deermouse).